We begin with the raw amino-acid sequence, 355 residues long: Ribosomal RNA large subunit methyltransferase M (355 aa).

Residues serine 191, 224–227 (APGG), aspartate 243, aspartate 263, and aspartate 279 contribute to the S-adenosyl-L-methionine site. Lysine 308 (proton acceptor) is an active-site residue.

It belongs to the class I-like SAM-binding methyltransferase superfamily. RNA methyltransferase RlmE family. RlmM subfamily. In terms of assembly, monomer.

It localises to the cytoplasm. It catalyses the reaction cytidine(2498) in 23S rRNA + S-adenosyl-L-methionine = 2'-O-methylcytidine(2498) in 23S rRNA + S-adenosyl-L-homocysteine + H(+). Functionally, catalyzes the 2'-O-methylation at nucleotide C2498 in 23S rRNA. The protein is Ribosomal RNA large subunit methyltransferase M of Stenotrophomonas maltophilia (strain R551-3).